The following is a 227-amino-acid chain: 2-C-methyl-D-erythritol 4-phosphate cytidylyltransferase (227 aa).

Belongs to the IspD/TarI cytidylyltransferase family. IspD subfamily.

It catalyses the reaction 2-C-methyl-D-erythritol 4-phosphate + CTP + H(+) = 4-CDP-2-C-methyl-D-erythritol + diphosphate. It functions in the pathway isoprenoid biosynthesis; isopentenyl diphosphate biosynthesis via DXP pathway; isopentenyl diphosphate from 1-deoxy-D-xylulose 5-phosphate: step 2/6. Its function is as follows. Catalyzes the formation of 4-diphosphocytidyl-2-C-methyl-D-erythritol from CTP and 2-C-methyl-D-erythritol 4-phosphate (MEP). The chain is 2-C-methyl-D-erythritol 4-phosphate cytidylyltransferase from Bordetella bronchiseptica (strain ATCC BAA-588 / NCTC 13252 / RB50) (Alcaligenes bronchisepticus).